We begin with the raw amino-acid sequence, 294 residues long: UPF0718 protein YcgR (294 aa).

Helical transmembrane passes span 15–35, 54–74, 92–112, 117–137, 174–194, 215–235, 247–267, and 273–293; these read ISIL…SGII, LAVL…CGII, AFML…YIAF, SVVF…GVIL, IDEF…AAAM, LVMM…AFIA, LIAF…MMLA, and FVFL…LLVK.

This sequence belongs to the UPF0718 family.

The protein resides in the cell membrane. The polypeptide is UPF0718 protein YcgR (ycgR) (Bacillus subtilis (strain 168)).